The primary structure comprises 271 residues: Digeranylgeranylglyceryl phosphate synthase (271 aa).

The next 8 membrane-spanning stretches (helical) occupy residues 11–31 (INCAMAALGVVVGELIAGARL), 33–53 (VGAVLAPVVAAVVCAGGNAIN), 88–108 (FAVGVGMATVINRMCLAIAAL), 125–145 (LIGNVMVSYLVGSCFLFGAAV), 149–169 (PAPAVWLFLLAFLANLVREIL), 201–221 (VFAIALAVLTPLPYLDGVVGW), 224–244 (LVLALPAAAVILLASVLAVAG), and 251–271 (AQRVVKVGMLLGLLAFLASLL).

It belongs to the UbiA prenyltransferase family. DGGGP synthase subfamily. The cofactor is Mg(2+).

It is found in the cell membrane. The catalysed reaction is sn-3-O-(geranylgeranyl)glycerol 1-phosphate + (2E,6E,10E)-geranylgeranyl diphosphate = 2,3-bis-O-(geranylgeranyl)-sn-glycerol 1-phosphate + diphosphate. Its pathway is membrane lipid metabolism; glycerophospholipid metabolism. Prenyltransferase that catalyzes the transfer of the geranylgeranyl moiety of geranylgeranyl diphosphate (GGPP) to the C2 hydroxyl of (S)-3-O-geranylgeranylglyceryl phosphate (GGGP). This reaction is the second ether-bond-formation step in the biosynthesis of archaeal membrane lipids. The polypeptide is Digeranylgeranylglyceryl phosphate synthase (Methanopyrus kandleri (strain AV19 / DSM 6324 / JCM 9639 / NBRC 100938)).